The chain runs to 381 residues: Dual specificity protein phosphatase 6 (381 aa).

The region spanning 30–148 is the Rhodanese domain; it reads GNEQLLLMDC…FQAEFALHCE (119 aa). Positions 176-203 are disordered; the sequence is SSSDIESDLDRDPNSATDSDGSPLSNSQ. The span at 189 to 203 shows a compositional bias: polar residues; that stretch reads NSATDSDGSPLSNSQ. A Tyrosine-protein phosphatase domain is found at 206 to 349; it reads FPVEILPFLY…LLDFERTLGL (144 aa). The Phosphocysteine intermediate role is filled by Cys293.

It belongs to the protein-tyrosine phosphatase family. Non-receptor class dual specificity subfamily. As to quaternary structure, interacts with MAPK1/ERK2. Ubiquitinated by the SCF(FBXO31) complex, leading to its proteasomal degradation. As to expression, expressed in lung, heart, brain, and kidney, but not significantly in skeletal muscle or testis.

It localises to the cytoplasm. The enzyme catalyses O-phospho-L-tyrosyl-[protein] + H2O = L-tyrosyl-[protein] + phosphate. The catalysed reaction is O-phospho-L-seryl-[protein] + H2O = L-seryl-[protein] + phosphate. It carries out the reaction O-phospho-L-threonyl-[protein] + H2O = L-threonyl-[protein] + phosphate. Dual specificity protein phosphatase, which mediates dephosphorylation and inactivation of MAP kinases. Has a specificity for the ERK family. Implicated in muscle and neuronal differentiation. Plays an important role in alleviating chronic postoperative pain. Necessary for the normal dephosphorylation of the long-lasting phosphorylated forms of spinal MAPK1/3 and MAP kinase p38 induced by peripheral surgery, which drives the resolution of acute postoperative allodynia. Also important for dephosphorylation of MAPK1/3 in local wound tissue, which further contributes to resolution of acute pain. This is Dual specificity protein phosphatase 6 (Dusp6) from Rattus norvegicus (Rat).